The primary structure comprises 156 residues: MNMNATLLGQAISFGMFVWFCMKYVWPPIIKAIEDRQKKIADGLQAAERAKKDLDLAQANASDQLKEAKRTATELIEQANKRKAQIIDEAREEAQAERQKILTQAEAEIEAERNRARDELRKQVATLAIAGAEKILERSIDKDTHKDILDNITAKL.

Residues 7 to 29 (LLGQAISFGMFVWFCMKYVWPPI) form a helical membrane-spanning segment.

This sequence belongs to the ATPase B chain family. As to quaternary structure, F-type ATPases have 2 components, F(1) - the catalytic core - and F(0) - the membrane proton channel. F(1) has five subunits: alpha(3), beta(3), gamma(1), delta(1), epsilon(1). F(0) has three main subunits: a(1), b(2) and c(10-14). The alpha and beta chains form an alternating ring which encloses part of the gamma chain. F(1) is attached to F(0) by a central stalk formed by the gamma and epsilon chains, while a peripheral stalk is formed by the delta and b chains.

It is found in the cell inner membrane. F(1)F(0) ATP synthase produces ATP from ADP in the presence of a proton or sodium gradient. F-type ATPases consist of two structural domains, F(1) containing the extramembraneous catalytic core and F(0) containing the membrane proton channel, linked together by a central stalk and a peripheral stalk. During catalysis, ATP synthesis in the catalytic domain of F(1) is coupled via a rotary mechanism of the central stalk subunits to proton translocation. In terms of biological role, component of the F(0) channel, it forms part of the peripheral stalk, linking F(1) to F(0). This is ATP synthase subunit b from Vibrio cholerae serotype O1 (strain ATCC 39541 / Classical Ogawa 395 / O395).